Consider the following 616-residue polypeptide: Dihydroxy-acid dehydratase (616 aa).

Mg(2+) is bound at residue aspartate 81. Cysteine 122 is a binding site for [2Fe-2S] cluster. Mg(2+) is bound by residues aspartate 123 and lysine 124. Lysine 124 is modified (N6-carboxylysine). Cysteine 195 serves as a coordination point for [2Fe-2S] cluster. Residue glutamate 491 participates in Mg(2+) binding. Serine 517 acts as the Proton acceptor in catalysis.

The protein belongs to the IlvD/Edd family. As to quaternary structure, homodimer. Requires [2Fe-2S] cluster as cofactor. Mg(2+) is required as a cofactor.

The catalysed reaction is (2R)-2,3-dihydroxy-3-methylbutanoate = 3-methyl-2-oxobutanoate + H2O. It carries out the reaction (2R,3R)-2,3-dihydroxy-3-methylpentanoate = (S)-3-methyl-2-oxopentanoate + H2O. Its pathway is amino-acid biosynthesis; L-isoleucine biosynthesis; L-isoleucine from 2-oxobutanoate: step 3/4. It functions in the pathway amino-acid biosynthesis; L-valine biosynthesis; L-valine from pyruvate: step 3/4. Its function is as follows. Functions in the biosynthesis of branched-chain amino acids. Catalyzes the dehydration of (2R,3R)-2,3-dihydroxy-3-methylpentanoate (2,3-dihydroxy-3-methylvalerate) into 2-oxo-3-methylpentanoate (2-oxo-3-methylvalerate) and of (2R)-2,3-dihydroxy-3-methylbutanoate (2,3-dihydroxyisovalerate) into 2-oxo-3-methylbutanoate (2-oxoisovalerate), the penultimate precursor to L-isoleucine and L-valine, respectively. The protein is Dihydroxy-acid dehydratase of Photorhabdus laumondii subsp. laumondii (strain DSM 15139 / CIP 105565 / TT01) (Photorhabdus luminescens subsp. laumondii).